Consider the following 390-residue polypeptide: UPF0496 protein At1g20180 (390 aa).

The next 2 helical transmembrane spans lie at 228-248 (LGGYSLVITHSAIVITLLIIA) and 250-270 (HSILGVFAAPALLGLCSFCLL).

Belongs to the UPF0496 family.

It localises to the membrane. The sequence is that of UPF0496 protein At1g20180 from Arabidopsis thaliana (Mouse-ear cress).